We begin with the raw amino-acid sequence, 242 residues long: Glycerol-3-phosphate acyltransferase (242 aa).

6 helical membrane-spanning segments follow: residues 7-27 (ISLL…IMFA), 61-81 (IAIG…ILLI), 102-122 (YYLT…PVYF), 135-155 (GFVF…WWTI), 162-182 (VSLA…IPWL), and 201-221 (DWYI…IIIW).

Belongs to the PlsY family. As to quaternary structure, probably interacts with PlsX.

Its subcellular location is the cell membrane. It carries out the reaction an acyl phosphate + sn-glycerol 3-phosphate = a 1-acyl-sn-glycero-3-phosphate + phosphate. The protein operates within lipid metabolism; phospholipid metabolism. In terms of biological role, catalyzes the transfer of an acyl group from acyl-phosphate (acyl-PO(4)) to glycerol-3-phosphate (G3P) to form lysophosphatidic acid (LPA). This enzyme utilizes acyl-phosphate as fatty acyl donor, but not acyl-CoA or acyl-ACP. In Mycoplasmoides gallisepticum (strain R(low / passage 15 / clone 2)) (Mycoplasma gallisepticum), this protein is Glycerol-3-phosphate acyltransferase.